The chain runs to 488 residues: Glutamate synthase [NADPH] small chain (488 aa).

Positions 38–69 (ESLRQQATRCMDCGIPFCHNGCPLGNLIPEWN) constitute a 4Fe-4S ferredoxin-type domain.

The cofactor is [4Fe-4S] cluster.

It carries out the reaction 2 L-glutamate + NADP(+) = L-glutamine + 2-oxoglutarate + NADPH + H(+). It functions in the pathway amino-acid biosynthesis; L-glutamate biosynthesis via GLT pathway; L-glutamate from 2-oxoglutarate and L-glutamine (NADP(+) route): step 1/1. This is Glutamate synthase [NADPH] small chain (gltD) from Mycobacterium tuberculosis (strain CDC 1551 / Oshkosh).